The chain runs to 677 residues: MHLLLWLLLLARLCRPEFICEVSKVTSQVEVNCDNKGLKALPPGLPGDTAILHLAENPLGAFSTALLGPLTRLAQLHLRQSQLTQLQVDGMLPRLETLDVSHNRLKSLPSLGRALPALTTLDASFNELVALSPGTLDGLSHLHELYLRGNKLKTLPPRLLAPTAQLRKLNLADNRLTELPPGFLEGLGELDTLYLQGNWLRTVPKGFFGDLLLPFTFLHGNPWSCDCEILYLARWLRDNSNNVYLWKEGVEAKATTPNVDSVRCVNWKNVPVHTYQGKDCPSPMDGGDMDYDNYDDEDEKLPGVEAPATRAVVSFSTHTKAHTTHWGLLYPTFAYPDHQMAYLSSTLELTEKQTMFPSTLGPIMPTTTPEPTTPPTTLEPTTTPTTPEPTTPPTTLEPTTTPITPEPTMPPTTLEPTTTPITPEPTTPSTTPTTPQPATTPTTPQPATTPTTPQPATTPTTPQPTTTPTIPELPTPPTTPEPTMPPTTLEPTTTPTSPTTTLILSESNTFLGIPELTSPCTTSEYPIVPSLVHLPEAHEVARGTSDSSRNHRLFNPDLCCLLPLGFYILGLLWLLFASVVLILLLTWAQHVKPQALAMATYTTHLELQWGKQVTVPWAWLLFLQGSFPTFRSSLFLWVRANSYVGPLMAGRRPSALSLGRGQDLLGTVGVRYSSHSL.

Residues 1-16 form the signal peptide; that stretch reads MHLLLWLLLLARLCRP. One can recognise an LRRNT domain in the interval 17 to 47; the sequence is EFICEVSKVTSQVEVNCDNKGLKALPPGLPG. Residues 17–564 are Extracellular-facing; it reads EFICEVSKVT…NPDLCCLLPL (548 aa). The cysteines at positions 20 and 33 are disulfide-linked. 6 LRR repeats span residues 72–93, 94–115, 117–138, 141–162, 165–186, and 189–210; these read RLAQ…GMLP, RLET…GRAL, ALTT…TLDG, HLHE…LLAP, QLRK…FLEG, and ELDT…FFGD. One can recognise an LRRCT domain in the interval 221–282; sequence NPWSCDCEIL…HTYQGKDCPS (62 aa). Intrachain disulfides connect cysteine 225–cysteine 264 and cysteine 227–cysteine 280. Residues tyrosine 291 and tyrosine 294 each carry the sulfotyrosine modification. 11 O-linked (GalNAc...) threonine glycosylation sites follow: threonine 309, threonine 319, threonine 323, threonine 324, threonine 346, threonine 354, threonine 368, threonine 372, threonine 376, threonine 377, and threonine 399. The tract at residues 359 to 499 is disordered; the sequence is TLGPIMPTTT…EPTTTPTSPT (141 aa). 4 stretches are compositionally biased toward low complexity: residues 362-385, 393-403, 411-421, and 427-470; these read PIMP…TTPT, PTTLEPTTTPI, and TPST…TPTI. Residues 471–485 show a composition bias toward pro residues; the sequence is PELPTPPTTPEPTMP. Low complexity predominate over residues 486–499; the sequence is PTTLEPTTTPTSPT. O-linked (GalNAc...) threonine glycosylation is present at threonine 487. Serine 497 is a glycosylation site (O-linked (GalNAc...) serine). The O-linked (GalNAc...) threonine glycan is linked to threonine 500. An O-linked (GalNAc...) serine glycan is attached at serine 523. Residues 565-585 traverse the membrane as a helical segment; sequence GFYILGLLWLLFASVVLILLL. Residues 586 to 677 are Cytoplasmic-facing; the sequence is TWAQHVKPQA…VGVRYSSHSL (92 aa). Phosphoserine is present on residues serine 654 and serine 657.

In terms of assembly, two GP-Ib beta are disulfide-linked to one GP-Ib alpha. GP-IX is complexed with the GP-Ib heterodimer via a non covalent linkage. Interacts with FLNB. Interacts with FLNA (via filamin repeats 4, 9, 12, 17, 19, 21, and 23). In terms of processing, O-glycosylated. Post-translationally, glycocalicin is the product of a proteolytic cleavage/shedding, catalyzed by ADAM17, which releases most of the extracellular domain. Binding sites for vWF and thrombin are in this part of the protein.

It localises to the membrane. GP-Ib, a surface membrane protein of platelets, participates in the formation of platelet plugs by binding to the A1 domain of vWF, which is already bound to the subendothelium. The sequence is that of Platelet glycoprotein Ib alpha chain (GP1BA) from Canis lupus familiaris (Dog).